The following is a 345-amino-acid chain: MSSYQKELEKYRDIDEDEILKTLSPEELEQLDCELQEMDPENMLLPAGLRQRDQTKKSPTGPLDREALLQYLEQQALEVKERDDLVPFTGEKKGKPYIQPKREIPVEEQVTLEPELEEALAHATDAEMCDIAAILGMYTLMSNKQYYDAICSGEICNTEGISSVVQPDKYKPVPDEPPNPTNIEEILKSVRSNDKEVEEVNLNNIQDIPIPMLTELCEAMKTNTHVRSFSLVATRSGDPVANAVADMLRENRSLQSLNIESNFISSTGLMAVLKAVRENATLTELRVDNQRQWPGDAVEMEMATVLEQCPSIVRFGYHFTQQGPRARAAQAMTRNNELRRQQKKR.

The tract at residues 42 to 63 (NMLLPAGLRQRDQTKKSPTGPL) is disordered.

This sequence belongs to the tropomodulin family. Binds to the N-terminus of tropomyosin and to actin.

It localises to the cytoplasm. It is found in the cytoskeleton. Its function is as follows. Blocks the elongation and depolymerization of the actin filaments at the pointed end. The Tmod/TM complex contributes to the formation of the short actin protofilament, which in turn defines the geometry of the membrane skeleton. In Bos taurus (Bovine), this protein is Tropomodulin-4 (TMOD4).